A 181-amino-acid chain; its full sequence is Adenine phosphoribosyltransferase (181 aa).

This sequence belongs to the purine/pyrimidine phosphoribosyltransferase family. In terms of assembly, homodimer.

It localises to the cytoplasm. It carries out the reaction AMP + diphosphate = 5-phospho-alpha-D-ribose 1-diphosphate + adenine. The protein operates within purine metabolism; AMP biosynthesis via salvage pathway; AMP from adenine: step 1/1. Functionally, catalyzes a salvage reaction resulting in the formation of AMP, that is energically less costly than de novo synthesis. In Shewanella amazonensis (strain ATCC BAA-1098 / SB2B), this protein is Adenine phosphoribosyltransferase.